The following is a 255-amino-acid chain: Hemin import ATP-binding protein HmuV (255 aa).

One can recognise an ABC transporter domain in the interval 2–238 (LQVEGLYLCR…AALKAVYGID (237 aa)). 34-41 (GPNGAGKS) provides a ligand contact to ATP.

Belongs to the ABC transporter superfamily. Heme (hemin) importer (TC 3.A.1.14.5) family. As to quaternary structure, the complex is composed of two ATP-binding proteins (HmuV), two transmembrane proteins (HmuU) and a solute-binding protein (HmuT).

The protein localises to the cell inner membrane. Part of the ABC transporter complex HmuTUV involved in hemin import. Responsible for energy coupling to the transport system. In Pseudomonas putida (strain ATCC 47054 / DSM 6125 / CFBP 8728 / NCIMB 11950 / KT2440), this protein is Hemin import ATP-binding protein HmuV.